We begin with the raw amino-acid sequence, 1687 residues long: Zinc finger protein 142 (1687 aa).

Disordered stretches follow at residues 1–23 (MTDP…LCPE) and 83–150 (TLTP…RLEG). The segment covering 125 to 140 (KEEKSDTQKDSQKAVD) has biased composition (basic and acidic residues). The residue at position 154 (S154) is a Phosphoserine. C2H2-type zinc fingers lie at residues 163–185 (HMCP…LHLH), 219–242 (HHCP…ASMH), and 253–275 (YACP…LKSH). A C2H2-type 4; atypical zinc finger spans residues 286 to 311 (LRCFQEGCSYAAPDRKAFIKHLKETH). 10 C2H2-type zinc fingers span residues 316–340 (VECR…HKSH), 343–366 (FHCP…KQGH), 372–395 (LRCT…GKMH), 401–423 (HQCP…MLLH), 429–451 (HKCE…MLTH), 457–479 (YMCT…MRKH), 485–507 (YQCN…KLRH), 512–536 (LMCE…SQHH), 544–567 (YPCH…NCKH), and 573–596 (FHCA…RKAH). K594 is covalently cross-linked (Glycyl lysine isopeptide (Lys-Gly) (interchain with G-Cter in SUMO2)). 5 disordered regions span residues 613–690 (EPEG…EVEE), 704–798 (LESV…PPLP), 897–935 (KGLP…EAEL), 947–1014 (REPE…SPTE), and 1052–1092 (GRGG…GDGD). Over residues 725 to 739 (PLGLEGPDGLEGPEL) the composition is skewed to low complexity. Residues 1061-1075 (TPQTQPDVSPLSNGD) show a composition bias toward polar residues. A compositionally biased stretch (low complexity) spans 1082-1092 (GSTESSSGDGD). C2H2-type zinc fingers lie at residues 1135–1158 (LHCS…KRRH), 1171–1194 (LQCG…RLKH), 1200–1222 (HQCP…QSRH), 1228–1251 (IPCS…LRVH), 1257–1280 (HFCP…NSCH), 1286–1309 (FACS…LRRH), 1328–1351 (LHCS…RKQH), 1354–1377 (LECG…RQQH), 1380–1403 (HRCQ…LEQH), 1424–1446 (LHCP…VKGH), 1452–1474 (YKCT…SRIH), 1480–1502 (YHCH…MRIH), 1508–1530 (YLCP…MTKH), 1536–1559 (YQCP…ETRH), and 1565–1587 (FMCE…LRKH). Residue K1193 forms a Glycyl lysine isopeptide (Lys-Gly) (interchain with G-Cter in SUMO2) linkage. Residue K1242 forms a Glycyl lysine isopeptide (Lys-Gly) (interchain with G-Cter in SUMO2) linkage. A Glycyl lysine isopeptide (Lys-Gly) (interchain with G-Cter in SUMO2) cross-link involves residue K1591. 2 consecutive C2H2-type zinc fingers follow at residues 1593 to 1615 (YVCN…ALTH) and 1621 to 1643 (FFCR…VRRH). The disordered stretch occupies residues 1638-1687 (KHVRRHHPDQADPNQGVGKDPTTPTVHLHDVQLEDPSPPAPAAPHTGPEG).

The protein belongs to the krueppel C2H2-type zinc-finger protein family.

It localises to the nucleus. In terms of biological role, may be involved in transcriptional regulation. This Homo sapiens (Human) protein is Zinc finger protein 142.